A 432-amino-acid polypeptide reads, in one-letter code: Polyadenylate-binding protein RBP47C (432 aa).

The interval 1–55 (MADVKIQSESESSDSHPVVDNQPPPPPPPPQQPAKEEENQPKTSPTPPPHWMRYP) is disordered. Residues 22–32 (QPPPPPPPPQQ) show a composition bias toward pro residues. RRM domains lie at 101 to 183 (KTIW…WASF) and 197 to 276 (LSIF…PATP). Residues 271–293 (IGPATPRKTNGYQQQGGYMPNGT) form a disordered region. A compositionally biased stretch (polar residues) spans 277 to 286 (RKTNGYQQQG). Residues 304 to 376 (TTIFVGGLDS…QTVRLSWGRN (73 aa)) form the RRM 3 domain.

Belongs to the polyadenylate-binding RBP47 family. In terms of assembly, interacts with the poly(A) tail of mRNA in nucleus. In terms of tissue distribution, expressed in leaves, stems, flowers, and seedlings.

It localises to the nucleus. The protein localises to the cytoplasmic granule. Heterogeneous nuclear ribonucleoprotein (hnRNP)-protein binding the poly(A) tail of mRNA and probably involved in some steps of pre-mRNA maturation. This chain is Polyadenylate-binding protein RBP47C (RBP47C), found in Arabidopsis thaliana (Mouse-ear cress).